The sequence spans 944 residues: Putative ATP-dependent RNA helicase (944 aa).

The Helicase ATP-binding domain occupies 66–235; the sequence is TTPRSPIDGI…VPLHNLLMKL (170 aa). 79–86 contacts ATP; it reads HGVGTGKT. A DEAH box motif is present at residues 183 to 186; the sequence is DEAH. The Helicase C-terminal domain maps to 451 to 523; that stretch reads CLTREVMTVP…QIIGRGIRYQ (73 aa).

Belongs to the DEAD box helicase family. DEAH subfamily.

It catalyses the reaction ATP + H2O = ADP + phosphate + H(+). This Heliothis virescens ascovirus 3e (HvAV-3e) protein is Putative ATP-dependent RNA helicase.